The primary structure comprises 221 residues: uncharacterized protein (221 aa).

The MOSC domain maps to 33–167 (RPAKSAVMLY…VSPGANLELL (135 aa)).

This is an uncharacterized protein from Bacillus subtilis (strain 168).